A 193-amino-acid polypeptide reads, in one-letter code: dCTP deaminase (193 aa).

Residues 110–115, Asp-128, 136–138, Tyr-171, Lys-178, and Gln-182 each bind dCTP; these read RSSLAR and VLE. Residue Glu-138 is the Proton donor/acceptor of the active site. Positions 169–193 are disordered; it reads RPYNSRQDAKYRGQQGAVASRIDKD.

Belongs to the dCTP deaminase family. As to quaternary structure, homotrimer.

It carries out the reaction dCTP + H2O + H(+) = dUTP + NH4(+). The protein operates within pyrimidine metabolism; dUMP biosynthesis; dUMP from dCTP (dUTP route): step 1/2. Functionally, catalyzes the deamination of dCTP to dUTP. This chain is dCTP deaminase, found in Yersinia pestis bv. Antiqua (strain Antiqua).